The following is a 656-amino-acid chain: L-type lectin-domain containing receptor kinase S.1 (656 aa).

An N-terminal signal peptide occupies residues 1 to 29; it reads MSWQWRRRQWPSPLLLILIVLHLVSSSSA. The tract at residues 30-273 is legume-lectin like; the sequence is IDFLYNSFSS…ARRILAWSLS (244 aa). The Extracellular portion of the chain corresponds to 30-304; the sequence is IDFLYNSFSS…SSSLSTGAIA (275 aa). 8 N-linked (GlcNAc...) asparagine glycosylation sites follow: asparagine 42, asparagine 63, asparagine 121, asparagine 139, asparagine 191, asparagine 219, asparagine 282, and asparagine 293. A helical membrane pass occupies residues 305–325; that stretch reads GIVIGCVVFVALIGFGGYLIW. The Cytoplasmic segment spans residues 326–656; that stretch reads KKLMREEEEE…AAADSTAAHA (331 aa). One can recognise a Protein kinase domain in the interval 361–639; the sequence is FSNDRLLGSG…LLGSPQEDLL (279 aa). ATP-binding positions include 367–375 and lysine 389; that span reads LGSGGFGKV. Aspartate 485 serves as the catalytic Proton acceptor.

The protein in the C-terminal section; belongs to the protein kinase superfamily. Ser/Thr protein kinase family. In the N-terminal section; belongs to the leguminous lectin family.

The protein localises to the cell membrane. The enzyme catalyses L-seryl-[protein] + ATP = O-phospho-L-seryl-[protein] + ADP + H(+). It catalyses the reaction L-threonyl-[protein] + ATP = O-phospho-L-threonyl-[protein] + ADP + H(+). In terms of biological role, involved in resistance response to the pathogenic oomycetes Phytophthora infestans and Phytophthora capsici and to the pathogenic bacteria Pseudomonas syringae. The sequence is that of L-type lectin-domain containing receptor kinase S.1 from Arabidopsis thaliana (Mouse-ear cress).